The chain runs to 938 residues: Mediator of RNA polymerase II transcription subunit 16 (938 aa).

This sequence belongs to the Mediator complex subunit 16 family. As to quaternary structure, component of the Mediator complex.

The protein resides in the nucleus. Component of the Mediator complex, a coactivator involved in the regulated transcription of nearly all RNA polymerase II-dependent genes. Mediator functions as a bridge to convey information from gene-specific regulatory proteins to the basal RNA polymerase II transcription machinery. Mediator is recruited to promoters by direct interactions with regulatory proteins and serves as a scaffold for the assembly of a functional preinitiation complex with RNA polymerase II and the general transcription factors. This is Mediator of RNA polymerase II transcription subunit 16 (SIN4) from Eremothecium gossypii (strain ATCC 10895 / CBS 109.51 / FGSC 9923 / NRRL Y-1056) (Yeast).